We begin with the raw amino-acid sequence, 293 residues long: N-acetylneuraminate lyase (293 aa).

Residues serine 48 and serine 49 each coordinate aceneuramate. Catalysis depends on tyrosine 137, which acts as the Proton donor. Catalysis depends on lysine 165, which acts as the Schiff-base intermediate with substrate. Residues threonine 167, glycine 189, aspartate 191, glutamate 192, and serine 208 each coordinate aceneuramate.

The protein belongs to the DapA family. NanA subfamily. Homotetramer.

The protein localises to the cytoplasm. The catalysed reaction is aceneuramate = aldehydo-N-acetyl-D-mannosamine + pyruvate. Its pathway is amino-sugar metabolism; N-acetylneuraminate degradation; D-fructose 6-phosphate from N-acetylneuraminate: step 1/5. Its function is as follows. Catalyzes the reversible aldol cleavage of N-acetylneuraminic acid (sialic acid; Neu5Ac) to form pyruvate and N-acetylmannosamine (ManNAc) via a Schiff base intermediate. The chain is N-acetylneuraminate lyase from Staphylococcus aureus (strain MRSA252).